We begin with the raw amino-acid sequence, 151 residues long: NADPH-dependent 7-cyano-7-deazaguanine reductase (151 aa).

The active-site Thioimide intermediate is the Cys51. Asp58 (proton donor) is an active-site residue. Substrate-binding positions include 73–75 (VES) and 92–93 (HE).

The protein belongs to the GTP cyclohydrolase I family. QueF type 1 subfamily.

Its subcellular location is the cytoplasm. The enzyme catalyses 7-aminomethyl-7-carbaguanine + 2 NADP(+) = 7-cyano-7-deazaguanine + 2 NADPH + 3 H(+). Its pathway is tRNA modification; tRNA-queuosine biosynthesis. Catalyzes the NADPH-dependent reduction of 7-cyano-7-deazaguanine (preQ0) to 7-aminomethyl-7-deazaguanine (preQ1). This Bacteroides thetaiotaomicron (strain ATCC 29148 / DSM 2079 / JCM 5827 / CCUG 10774 / NCTC 10582 / VPI-5482 / E50) protein is NADPH-dependent 7-cyano-7-deazaguanine reductase.